The chain runs to 273 residues: Glutamate 5-kinase (273 aa).

K15 lines the ATP pocket. Substrate is bound by residues S55, D142, and N158. ATP-binding positions include 178 to 179 (SD) and 220 to 226 (TGGMLSK).

The protein belongs to the glutamate 5-kinase family.

It localises to the cytoplasm. It carries out the reaction L-glutamate + ATP = L-glutamyl 5-phosphate + ADP. The protein operates within amino-acid biosynthesis; L-proline biosynthesis; L-glutamate 5-semialdehyde from L-glutamate: step 1/2. In terms of biological role, catalyzes the transfer of a phosphate group to glutamate to form L-glutamate 5-phosphate. The chain is Glutamate 5-kinase from Streptococcus pyogenes serotype M49 (strain NZ131).